We begin with the raw amino-acid sequence, 337 residues long: MVVKVGINGFGRIGRIVFRNAIEHGEVNVVAVNDPFIETHYAAYMLKYDSTHGQFKGTIDVNSNGLTVNGKAVTFYQERDPASIPWGKHGVEYVVESTGVFTTTEKASAHLKGGAKKVIISAPSADAPMFVMGVNEKTYDPSVNVLSNASCTTNCLAPLAKVINDNFGLTEGLMTTIHSYTATQKTVDGPSSKDWRGGRTAAQNIIPSSTGAAKAVGKVIPSLNGKLTGMSMRVPTANVSVVDLTCKTEKPVTYDQIKQTIKKASEGELKGILGYSEDALVSSDLNGDSRSSIFDASAGIALNDHFIKLISWYDNEWGYSRRVVDLIAYIAKVDAGK.

Residues 12-13 (RI), Asp-34, and Arg-79 contribute to the NAD(+) site. D-glyceraldehyde 3-phosphate-binding positions include 150 to 152 (SCT), Thr-181, 210 to 211 (TG), and Arg-233. The active-site Nucleophile is Cys-151. Position 315 (Asn-315) interacts with NAD(+).

This sequence belongs to the glyceraldehyde-3-phosphate dehydrogenase family. As to quaternary structure, homotetramer.

It is found in the cytoplasm. It catalyses the reaction D-glyceraldehyde 3-phosphate + phosphate + NAD(+) = (2R)-3-phospho-glyceroyl phosphate + NADH + H(+). It functions in the pathway carbohydrate degradation; glycolysis; pyruvate from D-glyceraldehyde 3-phosphate: step 1/5. The chain is Glyceraldehyde-3-phosphate dehydrogenase (GPD) from Ajellomyces capsulatus (Darling's disease fungus).